Here is a 157-residue protein sequence, read N- to C-terminus: NADPH-dependent 7-cyano-7-deazaguanine reductase (157 aa).

Residue Cys55 is the Thioimide intermediate of the active site. The active-site Proton donor is the Asp62. Residues 77-79 (VES) and 96-97 (HE) contribute to the substrate site.

It belongs to the GTP cyclohydrolase I family. QueF type 1 subfamily.

It localises to the cytoplasm. The catalysed reaction is 7-aminomethyl-7-carbaguanine + 2 NADP(+) = 7-cyano-7-deazaguanine + 2 NADPH + 3 H(+). It functions in the pathway tRNA modification; tRNA-queuosine biosynthesis. Catalyzes the NADPH-dependent reduction of 7-cyano-7-deazaguanine (preQ0) to 7-aminomethyl-7-deazaguanine (preQ1). The polypeptide is NADPH-dependent 7-cyano-7-deazaguanine reductase (Neisseria meningitidis serogroup A / serotype 4A (strain DSM 15465 / Z2491)).